Consider the following 442-residue polypeptide: 4-hydroxyphenylpyruvate dioxygenase (442 aa).

VOC domains lie at 45-200 (RFHH…GFEA) and 216-376 (RLDH…IFTK). Positions 219, 301, and 387 each coordinate Fe cation.

It belongs to the 4HPPD family. Fe cation serves as cofactor.

The protein localises to the cytoplasm. The enzyme catalyses 3-(4-hydroxyphenyl)pyruvate + O2 = homogentisate + CO2. Its pathway is amino-acid degradation; L-phenylalanine degradation; acetoacetate and fumarate from L-phenylalanine: step 3/6. It participates in cofactor biosynthesis; prenylquinone biosynthesis. In Daucus carota (Wild carrot), this protein is 4-hydroxyphenylpyruvate dioxygenase.